A 361-amino-acid chain; its full sequence is Peptide chain release factor 1 (361 aa).

Glutamine 235 carries the N5-methylglutamine modification.

The protein belongs to the prokaryotic/mitochondrial release factor family. Methylated by PrmC. Methylation increases the termination efficiency of RF1.

The protein resides in the cytoplasm. In terms of biological role, peptide chain release factor 1 directs the termination of translation in response to the peptide chain termination codons UAG and UAA. This chain is Peptide chain release factor 1, found in Xanthomonas oryzae pv. oryzae (strain MAFF 311018).